A 588-amino-acid chain; its full sequence is Hyaluronan synthase 1 (588 aa).

The Cytoplasmic segment spans residues 1–28 (MKEKAAETMEIPEGIPKDLEPKHPTLWR). The chain crosses the membrane as a helical span at residues 29-49 (IIYYSFGVVLLATITAAYVAE). At 50–61 (FQVLKHEAILFS) the chain is on the extracellular side. Residues 62-82 (LGLYGLAMLLHLMMQSLFAFL) form a helical membrane-spanning segment. Topologically, residues 83-411 (EIRRVNKSEL…IWMTYESVVS (329 aa)) are cytoplasmic. The helical transmembrane segment at 412 to 432 (FIFPFFITATVIRLIYAGTIW) threads the bilayer. Residue asparagine 433 is a topological domain, extracellular. The helical transmembrane segment at 434-454 (VVWLLLCIQIMSLFKSIYACW) threads the bilayer. At 455–456 (LR) the chain is on the cytoplasmic side. A helical membrane pass occupies residues 457-477 (GNFIMLLMSLYSMLYMTGLLP). The Extracellular portion of the chain corresponds to 478–505 (SKYFALLTLNKTGWGTSGRKKIVGNYMP). The chain crosses the membrane as a helical span at residues 506-526 (ILPLSIWAAVLCGGVGYSIYM). Over 527-543 (DCQNDWSTPEKQKEMYH) the chain is Cytoplasmic. The helical transmembrane segment at 544–564 (LLYGCVGYVMYWVIMAVMYWV) threads the bilayer. The Extracellular portion of the chain corresponds to 565 to 588 (WVKRCCRKRSQTVTLVHDIPDMCV).

Belongs to the NodC/HAS family. Mg(2+) is required as a cofactor. As to expression, expression moves as a gradient through the embryo. The mRNA is first expressed in the animal region of the blastula, and by early gastrula is found everywhere except in the outer layer of the dorsal blastopore lip. By mid-gastrula, protein is present in the inner ectodermal layer and the endoderm, then disappears from dorsal ectoderm as the neural plate is induced and later decays in a dorsoventral direction. Last expressed in ventral regions of the gut at the tailbud stage (at protein level).

It localises to the membrane. It catalyses the reaction [hyaluronan](n) + UDP-N-acetyl-alpha-D-glucosamine = N-acetyl-beta-D-glucosaminyl-(1-&gt;4)-[hyaluronan](n) + UDP + H(+). It carries out the reaction N-acetyl-beta-D-glucosaminyl-(1-&gt;4)-[hyaluronan](n) + UDP-alpha-D-glucuronate = [hyaluronan](n+1) + UDP + H(+). It participates in glycan biosynthesis; hyaluronan biosynthesis. Catalyzes the addition of GlcNAc or GlcUA monosaccharides to the nascent hyaluronan polymer. Therefore, it is essential to hyaluronan synthesis a major component of most extracellular matrices that has a structural role in tissues architectures and regulates cell adhesion, migration and differentiation. Also able to catalyze the synthesis of chito-oligosaccharide depending on the substrate. This chain is Hyaluronan synthase 1 (has1), found in Xenopus laevis (African clawed frog).